The chain runs to 687 residues: Acetyl-coenzyme A synthetase 2 (687 aa).

CoA is bound by residues 206–209 (RGGK) and Thr-325. ATP is bound by residues 401–403 (GEP), 425–430 (DTMWQT), Asp-516, and Arg-531. Ser-539 is a CoA binding site. Position 542 (Arg-542) interacts with ATP. Arg-617 lines the CoA pocket.

This sequence belongs to the ATP-dependent AMP-binding enzyme family.

It carries out the reaction acetate + ATP + CoA = acetyl-CoA + AMP + diphosphate. This chain is Acetyl-coenzyme A synthetase 2 (ACS2), found in Eremothecium gossypii (strain ATCC 10895 / CBS 109.51 / FGSC 9923 / NRRL Y-1056) (Yeast).